A 115-amino-acid chain; its full sequence is U3-lycotoxin-Ls1v (115 aa).

Residues 1 to 20 (MKFVLLFGVLLVTLFSHSSA) form the signal peptide. The propeptide occupies 21 to 44 (EMLDDFDQADEDELLSLIEKEEAR). 4 disulfides stabilise this stretch: C48–C63, C55–C72, C62–C87, and C74–C85.

This sequence belongs to the neurotoxin 19 (CSTX) family. 01 subfamily. As to expression, expressed by the venom gland.

Its subcellular location is the secreted. The chain is U3-lycotoxin-Ls1v from Lycosa singoriensis (Wolf spider).